The chain runs to 504 residues: Cytochrome P450 6a9 (504 aa).

Cysteine 449 provides a ligand contact to heme.

It belongs to the cytochrome P450 family. Requires heme as cofactor.

The protein localises to the endoplasmic reticulum membrane. The protein resides in the microsome membrane. Functionally, involved in the metabolism of insect hormones and in the breakdown of synthetic insecticides. In Drosophila melanogaster (Fruit fly), this protein is Cytochrome P450 6a9 (Cyp6a9).